Consider the following 239-residue polypeptide: Probable transcriptional regulatory protein BBR47_14810 (239 aa).

Belongs to the TACO1 family. YeeN subfamily.

It localises to the cytoplasm. In Brevibacillus brevis (strain 47 / JCM 6285 / NBRC 100599), this protein is Probable transcriptional regulatory protein BBR47_14810.